A 615-amino-acid chain; its full sequence is Forkhead box protein O (615 aa).

Disordered stretches follow at residues 39–77 (RARSNTWPCPRPENFVEPTDELDSTKASNQQLAPGDSQQ), 182–205 (KSVRRRAASMETSRYEKRRGRAKK), 217–269 (GLND…RLSP), 318–359 (FSAA…APGY), and 389–409 (NSVTTTMSPAYPNSEPSSDSL). Residue Thr44 is modified to Phosphothreonine; by PKB/AKT1. The span at 63–77 (TKASNQQLAPGDSQQ) shows a compositional bias: polar residues. A Phosphoserine modification is found at Ser75. Positions 95–201 (WGNLSYADLI…ETSRYEKRRG (107 aa)) form a DNA-binding region, fork-head. Ser190 bears the Phosphoserine; by PKB/AKT1 mark. Polar residues-rich tracts occupy residues 221 to 230 (ATPSPSSSVS) and 256 to 265 (RASSNASSCG). Residue Ser259 is modified to Phosphoserine; by PKB/AKT1. Ser262, Ser263, and Ser268 each carry phosphoserine. Positions 326 to 335 (SQPPPPPYQP) are enriched in pro residues. Low complexity predominate over residues 336 to 351 (PQHQQAQQQQQQSPYA).

Interacts with melt.

It localises to the cytoplasm. It is found in the nucleus. In terms of biological role, transcription factor involved in the regulation of the insulin signaling pathway. Consistently activates both the downstream target Thor\d4EBP and the feedback control target InR. Involved in negative regulation of the cell cycle, modulating cell growth and proliferation. In response to cellular stresses, such as nutrient deprivation or increased levels of reactive oxygen species, foxo is activated and inhibits growth through the action of target genes such as Thor. Foxo activated in the adult fat body can regulate lifespan in adults; an insulin peptide itself may function as one secondary messenger of insulin-regulated aging. Also regulates Lip4, homolog of human acid lipases, thereby acting as a key modulator of lipid metabolism by insulin signaling and integrates insulin responses to glucose and lipid homeostasis. The chain is Forkhead box protein O from Drosophila erecta (Fruit fly).